The following is a 1325-amino-acid chain: MSDAVILRSVKKFGEDNYGFESSTFYNNDKNSGLQDERKGDSSQVGFFQLFRFSSTTDIWLMFVGSLCAFLHGLSHPGVLLIFGTMTDVFIAYDTELQELKIPGKACVNNTIVWINSSLNQNVTNGTQCGLLDIESEMIKFASYYAGIALLVLITGYIQICFWVIAAARQIQKMRKISFRKVMRMEIGWFDCNSVGELNTRFSDDINRVNDAIADQMPIFIQRMTTSICGFLLGFYQGWKLTLVIISVSPLIGIGAAIIGLSVSKFTDYELKAYAKAGSVADEVISSMRTVAAFGGEKKEVERYEKNLVFAQRWGIRKGIVMGFFTGFMWCLIFLCYALAFWYGSKLVLEDGEYTAGTLVQIFLSILLGALNLGNASSCLEAFATGRAAATSIFHTIDRKPIIDCMSEDGYKLDRIKGEIEFHNVTFHYPSRPEVKILNNLSMVIKSGEMTAVVGSSGSGKSTALQLIQRFYDPSEGMVTLDGHDIRSLNIQWLRTQIGIVEQEPVLFSTTIAENIRYGREDATMEDIVRAAKAANAYNFIMDLPEQFDTLVGEGGGQMSGGQKQRVAIARALVRNPKILLLDMATSALDNESEAMVQEALSKIQQGHTIISVAHRLSTVRAADVIIGFEHGTAVERGSHEELLERKGVYFTLVTLQSQGEPTANAEGIRGEEETDGVSLDNEQTFCRGSYQSSLRASLRQRSKSQLSYLAHEPPLAVVDHKSTYEEDRKDKDIPVEEEIEPAPVRRILKFNAPEWPYMLFGAVGAAVNGSVTPLYAFLFSQILGTFSLPDKEEQRSQINGVCLLFVAVGCVSLCTQFLQGYAFAKSGELLTKRLRKYGFRAMLGQDIGWFDDLRNSPGALTTRLATDASQVQGAAGSQIGMMVNSFTNVTVAMIIAFFFSWKLSLVIMCFFPFLALSGALQTRMLTGFATQDKEALEIAGQITNEALSNIRTVAGIGKERQFIEAFEAELEKPFKTAFRKANVYGFCFGFSQCIVFVANSASYRYGGYLIPNEGLHFSYVFRVISSVVLSATALGRASSYTPSYAKAKISAARFFQLLDRQPPIKVYSSAGEKWDNFQGQVDFVDCKFTYPSRPDTQVLNGLSVSVRPGQTLAFVGSSGCGKSTSIQLLERFYDPDQGKVMIDGHDSRKVNVQFLRSNIGIVSQEPVLFACSIMDNIKYGDNTREIPMEKVIEAAKQAQLHDFVMSLPEKYETNVGSQGSQLSRGEKQRIAIARAIVRNPKILLLDEATSALDTESEKTVQVALDKAREGRTCIVIAHRLSTIQNSDIIAVMSQGIVIEKGTHEELMAQKGAYYKLVTTGAPIS.

The Cytoplasmic portion of the chain corresponds to 1–62 (MSDAVILRSV…FSSTTDIWLM (62 aa)). Positions 62–385 (MFVGSLCAFL…ASSCLEAFAT (324 aa)) constitute an ABC transmembrane type-1 1 domain. Residues 63 to 83 (FVGSLCAFLHGLSHPGVLLIF) form a helical membrane-spanning segment. Residues 84–147 (GTMTDVFIAY…MIKFASYYAG (64 aa)) are Extracellular-facing. 4 N-linked (GlcNAc...) asparagine glycosylation sites follow: N109, N116, N122, and N125. The helical transmembrane segment at 148-168 (IALLVLITGYIQICFWVIAAA) threads the bilayer. Residues 169-240 (RQIQKMRKIS…FLLGFYQGWK (72 aa)) lie on the Cytoplasmic side of the membrane. Residues 241–261 (LTLVIISVSPLIGIGAAIIGL) traverse the membrane as a helical segment. Residues 262 to 319 (SVSKFTDYELKAYAKAGSVADEVISSMRTVAAFGGEKKEVERYEKNLVFAQRWGIRKG) lie on the Extracellular side of the membrane. Residues 320–340 (IVMGFFTGFMWCLIFLCYALA) traverse the membrane as a helical segment. The Cytoplasmic segment spans residues 341-353 (FWYGSKLVLEDGE). Residues 354-374 (YTAGTLVQIFLSILLGALNLG) traverse the membrane as a helical segment. 3 N-linked (GlcNAc...) asparagine glycosylation sites follow: N375, N424, and N440. Topologically, residues 375-759 (NASSCLEAFA…KFNAPEWPYM (385 aa)) are extracellular. The region spanning 420–656 (IEFHNVTFHY…KGVYFTLVTL (237 aa)) is the ABC transporter 1 domain. Residue 455–462 (GSSGSGKS) coordinates ATP. A glycan (N-linked (GlcNAc...) asparagine) is linked at N591. In terms of domain architecture, ABC transmembrane type-1 2 spans 759–1047 (MLFGAVGAAV…ASSYTPSYAK (289 aa)). The helical transmembrane segment at 760–780 (LFGAVGAAVNGSVTPLYAFLF) threads the bilayer. Residues 781–798 (SQILGTFSLPDKEEQRSQ) lie on the Cytoplasmic side of the membrane. Residues 799–819 (INGVCLLFVAVGCVSLCTQFL) traverse the membrane as a helical segment. Residues 820-894 (QGYAFAKSGE…NSFTNVTVAM (75 aa)) lie on the Extracellular side of the membrane. N-linked (GlcNAc...) asparagine glycosylation is present at N889. Residues 895 to 915 (IIAFFFSWKLSLVIMCFFPFL) form a helical membrane-spanning segment. Over 916–983 (ALSGALQTRM…PFKTAFRKAN (68 aa)) the chain is Cytoplasmic. A helical transmembrane segment spans residues 984–1004 (VYGFCFGFSQCIVFVANSASY). At 1005-1014 (RYGGYLIPNE) the chain is on the extracellular side. Residues 1015-1035 (GLHFSYVFRVISSVVLSATAL) form a helical membrane-spanning segment. Residues 1036–1325 (GRASSYTPSY…KLVTTGAPIS (290 aa)) are Cytoplasmic-facing. The ABC transporter 2 domain occupies 1082–1320 (VDFVDCKFTY…KGAYYKLVTT (239 aa)). 1117–1124 (GSSGCGKS) is a binding site for ATP.

It belongs to the ABC transporter superfamily. ABCB family. Multidrug resistance exporter (TC 3.A.1.201) subfamily. Interacts with HAX1. Interacts with the adapter protein complex 2 (AP-2) throught AP2A2 or AP2A1; this interaction regulates cell membrane expression of ABCB11 through its internalization in a clathrin-dependent manner and its subsequent degradation. In terms of processing, N-glycosylated. Ubiquitinated; short-chain ubiquitination regulates cell-Surface expression of ABCB11. In terms of tissue distribution, liver.

It localises to the apical cell membrane. The protein localises to the recycling endosome membrane. The protein resides in the endosome. It is found in the cell membrane. It carries out the reaction cholate(in) + ATP + H2O = cholate(out) + ADP + phosphate + H(+). It catalyses the reaction taurocholate(in) + ATP + H2O = taurocholate(out) + ADP + phosphate + H(+). The catalysed reaction is glycocholate(in) + ATP + H2O = glycocholate(out) + ADP + phosphate + H(+). The enzyme catalyses glycochenodeoxycholate(in) + ATP + H2O = glycochenodeoxycholate(out) + ADP + phosphate + H(+). It carries out the reaction taurochenodeoxycholate(in) + ATP + H2O = taurochenodeoxycholate(out) + ADP + phosphate + H(+). It catalyses the reaction glycoursodeoxycholate(in) + ATP + H2O = glycoursodeoxycholate(out) + ADP + phosphate + H(+). The catalysed reaction is tauroursodeoxycholate(in) + ATP + H2O = tauroursodeoxycholate(out) + ADP + phosphate + H(+). The enzyme catalyses taurodeoxycholate(in) + ATP + H2O = taurodeoxycholate(out) + ADP + phosphate + H(+). It carries out the reaction taurolithocholate 3-sulfate(in) + ATP + H2O = taurolithocholate 3-sulfate(out) + ADP + phosphate + H(+). It catalyses the reaction pravastatin(in) + ATP + H2O = pravastatin(out) + ADP + phosphate + H(+). With respect to regulation, the uptake of taurocholate is inhibited by taurolithocholate sulfate with an IC(50) of 9 uM. Pravastatin competitively inhibits the transport of taurocholic acid. Cyclosporin A, glibenclamide, rifampicin and troglitazonestrongly competitively inhibit the transport activity of taurocholate. The canalicular transport activity of taurocholate is strongly dependent on canalicular membrane cholesterol content. The uptake of taurocholate is increased by short- and medium-chain fatty acids. Cholesterol increases transport capacity of taurocholate without affecting the affinity for the substrate. Its function is as follows. Catalyzes the transport of the major hydrophobic bile salts, such as taurine and glycine-conjugated cholic acid across the canalicular membrane of hepatocytes in an ATP-dependent manner, therefore participates in hepatic bile acid homeostasis and consequently to lipid homeostasis through regulation of biliary lipid secretion in a bile salts dependent manner. Transports taurine-conjugated bile salts more rapidly than glycine-conjugated bile salts. Also transports non-bile acid compounds, such as pravastatin and fexofenadine in an ATP-dependent manner and may be involved in their biliary excretion. The protein is Bile salt export pump of Canis lupus familiaris (Dog).